A 178-amino-acid chain; its full sequence is Large ribosomal subunit protein uL6 (178 aa).

The protein belongs to the universal ribosomal protein uL6 family. As to quaternary structure, part of the 50S ribosomal subunit.

Functionally, this protein binds to the 23S rRNA, and is important in its secondary structure. It is located near the subunit interface in the base of the L7/L12 stalk, and near the tRNA binding site of the peptidyltransferase center. This Buchnera aphidicola subsp. Schizaphis graminum (strain Sg) protein is Large ribosomal subunit protein uL6.